The sequence spans 117 residues: Putative pterin-4-alpha-carbinolamine dehydratase (117 aa).

Belongs to the pterin-4-alpha-carbinolamine dehydratase family.

The catalysed reaction is (4aS,6R)-4a-hydroxy-L-erythro-5,6,7,8-tetrahydrobiopterin = (6R)-L-erythro-6,7-dihydrobiopterin + H2O. The sequence is that of Putative pterin-4-alpha-carbinolamine dehydratase from Azoarcus sp. (strain BH72).